The chain runs to 583 residues: Cell division protein FtsZ (583 aa).

Residues 24–28 (GGGGN), 111–113 (GTG), E142, R146, and D190 contribute to the GTP site. Disordered regions lie at residues 391–425 (HQQP…VQQA) and 510–583 (TNSL…RQSN). The span at 412–425 (APAALRPAQPVQQA) shows a compositional bias: low complexity.

It belongs to the FtsZ family. As to quaternary structure, homodimer. Polymerizes to form a dynamic ring structure in a strictly GTP-dependent manner. Interacts directly with several other division proteins.

It is found in the cytoplasm. Functionally, essential cell division protein that forms a contractile ring structure (Z ring) at the future cell division site. The regulation of the ring assembly controls the timing and the location of cell division. One of the functions of the FtsZ ring is to recruit other cell division proteins to the septum to produce a new cell wall between the dividing cells. Binds GTP and shows GTPase activity. The protein is Cell division protein FtsZ of Rhizobium radiobacter (Agrobacterium tumefaciens).